Consider the following 599-residue polypeptide: Putative sensor histidine kinase NtrY-like (599 aa).

Transmembrane regions (helical) follow at residues 17–37 (VLIFTLATAAIIFACATFYVI), 44–64 (FSTIIGFLLVDLAIFLILGVV), 85–105 (IVIAFSLVAAIPTIIVSVFSV), and 285–305 (IMFIFIALLLLFVAISFGVIF). The 55-residue stretch at 307 to 361 (AKIVKPIKKLVTATDNVKDGDLTVQVPENEVDKDEIGTLYVAFNRMIKQLSRQQR) folds into the HAMP domain. The 212-residue stretch at 378 to 589 (KVAHEIKNPL…IIDIKFDLKE (212 aa)) folds into the Histidine kinase domain. His-381 is subject to Phosphohistidine; by autocatalysis.

The protein localises to the cell membrane. The catalysed reaction is ATP + protein L-histidine = ADP + protein N-phospho-L-histidine.. Functionally, member of the two-component regulatory system RC0948/RC0849. The sequence is that of Putative sensor histidine kinase NtrY-like from Rickettsia conorii (strain ATCC VR-613 / Malish 7).